The primary structure comprises 445 residues: Phosphoglucosamine mutase (445 aa).

The Phosphoserine intermediate role is filled by S102. Residues S102, D241, D243, and D245 each coordinate Mg(2+). S102 bears the Phosphoserine mark.

This sequence belongs to the phosphohexose mutase family. The cofactor is Mg(2+). Post-translationally, activated by phosphorylation.

The enzyme catalyses alpha-D-glucosamine 1-phosphate = D-glucosamine 6-phosphate. Its function is as follows. Catalyzes the conversion of glucosamine-6-phosphate to glucosamine-1-phosphate. The sequence is that of Phosphoglucosamine mutase from Escherichia coli O7:K1 (strain IAI39 / ExPEC).